The chain runs to 54 residues: Sec-independent protein translocase protein TatA (54 aa).

Residues 1–21 (MGMSFSHLLIVLLIIFVLFGA) traverse the membrane as a helical segment.

This sequence belongs to the TatA/E family. As to quaternary structure, the Tat system comprises two distinct complexes: a TatABC complex, containing multiple copies of TatA, TatB and TatC subunits, and a separate TatA complex, containing only TatA subunits. Substrates initially bind to the TatABC complex, which probably triggers association of the separate TatA complex to form the active translocon.

Its subcellular location is the cell inner membrane. Functionally, part of the twin-arginine translocation (Tat) system that transports large folded proteins containing a characteristic twin-arginine motif in their signal peptide across membranes. TatA could form the protein-conducting channel of the Tat system. This is Sec-independent protein translocase protein TatA from Rickettsia prowazekii (strain Madrid E).